A 189-amino-acid chain; its full sequence is Lipid A acyltransferase PagP (189 aa).

The signal sequence occupies residues 1–23 (MRLKLILYFLILSCYLGIGSARA). Active-site residues include H61, D104, and S105.

The protein belongs to the lipid A palmitoyltransferase family. Homodimer.

It localises to the cell outer membrane. The catalysed reaction is a lipid A + a 1,2-diacyl-sn-glycero-3-phosphocholine = a hepta-acyl lipid A + a 2-acyl-sn-glycero-3-phosphocholine. It catalyses the reaction a lipid IVA + a 1,2-diacyl-sn-glycero-3-phosphocholine = a lipid IVB + a 2-acyl-sn-glycero-3-phosphocholine. It carries out the reaction a lipid IIA + a 1,2-diacyl-sn-glycero-3-phosphocholine = a lipid IIB + a 2-acyl-sn-glycero-3-phosphocholine. Its function is as follows. Transfers a fatty acid residue from the sn-1 position of a phospholipid to the N-linked hydroxyfatty acid chain on the proximal unit of lipid A or its precursors. The protein is Lipid A acyltransferase PagP of Erwinia tasmaniensis (strain DSM 17950 / CFBP 7177 / CIP 109463 / NCPPB 4357 / Et1/99).